A 61-amino-acid polypeptide reads, in one-letter code: Putative antitoxin PYRAB11980 (61 aa).

This sequence belongs to the UPF0165 family.

Possibly the antitoxin component of a type II toxin-antitoxin (TA) system. In Pyrococcus abyssi (strain GE5 / Orsay), this protein is Putative antitoxin PYRAB11980.